A 145-amino-acid polypeptide reads, in one-letter code: Large ribosomal subunit protein uL11 (145 aa).

This sequence belongs to the universal ribosomal protein uL11 family. In terms of assembly, part of the ribosomal stalk of the 50S ribosomal subunit. Interacts with L10 and the large rRNA to form the base of the stalk. L10 forms an elongated spine to which L12 dimers bind in a sequential fashion forming a multimeric L10(L12)X complex. Post-translationally, one or more lysine residues are methylated.

Forms part of the ribosomal stalk which helps the ribosome interact with GTP-bound translation factors. The protein is Large ribosomal subunit protein uL11 of Rubrobacter xylanophilus (strain DSM 9941 / JCM 11954 / NBRC 16129 / PRD-1).